A 197-amino-acid chain; its full sequence is Nucleoside triphosphate pyrophosphatase (197 aa).

Asp71 serves as the catalytic Proton acceptor.

It belongs to the Maf family. A divalent metal cation serves as cofactor.

The protein resides in the cytoplasm. The catalysed reaction is a ribonucleoside 5'-triphosphate + H2O = a ribonucleoside 5'-phosphate + diphosphate + H(+). It carries out the reaction a 2'-deoxyribonucleoside 5'-triphosphate + H2O = a 2'-deoxyribonucleoside 5'-phosphate + diphosphate + H(+). Its function is as follows. Nucleoside triphosphate pyrophosphatase. May have a dual role in cell division arrest and in preventing the incorporation of modified nucleotides into cellular nucleic acids. The protein is Nucleoside triphosphate pyrophosphatase of Synechococcus sp. (strain JA-2-3B'a(2-13)) (Cyanobacteria bacterium Yellowstone B-Prime).